A 340-amino-acid polypeptide reads, in one-letter code: UDP-3-O-(3-hydroxymyristoyl)glucosamine N-acyltransferase (340 aa).

H239 functions as the Proton acceptor in the catalytic mechanism.

The protein belongs to the transferase hexapeptide repeat family. LpxD subfamily. As to quaternary structure, homotrimer.

It catalyses the reaction a UDP-3-O-[(3R)-3-hydroxyacyl]-alpha-D-glucosamine + a (3R)-hydroxyacyl-[ACP] = a UDP-2-N,3-O-bis[(3R)-3-hydroxyacyl]-alpha-D-glucosamine + holo-[ACP] + H(+). The catalysed reaction is UDP-3-O-[(3R)-3-hydroxytetradecanoyl]-alpha-D-glucosamine + (3R)-hydroxytetradecanoyl-[ACP] = UDP-2-N,3-O-bis[(3R)-3-hydroxytetradecanoyl]-alpha-D-glucosamine + holo-[ACP] + H(+). Its pathway is glycolipid biosynthesis; lipid IV(A) biosynthesis; lipid IV(A) from (3R)-3-hydroxytetradecanoyl-[acyl-carrier-protein] and UDP-N-acetyl-alpha-D-glucosamine: step 3/6. Its function is as follows. Catalyzes the N-acylation of UDP-3-O-(hydroxytetradecanoyl)glucosamine using 3-hydroxytetradecanoyl-ACP as the acyl donor. Is involved in the biosynthesis of lipid A, a phosphorylated glycolipid that anchors the lipopolysaccharide to the outer membrane of the cell. The chain is UDP-3-O-(3-hydroxymyristoyl)glucosamine N-acyltransferase from Pectobacterium atrosepticum (strain SCRI 1043 / ATCC BAA-672) (Erwinia carotovora subsp. atroseptica).